Reading from the N-terminus, the 680-residue chain is Probable ATP-dependent RNA helicase pitchoune (680 aa).

The tract at residues 1 to 168 (MSIREKLLMK…GKPAKDDEPF (168 aa)) is disordered. The segment covering 29 to 42 (KNAQKQEPPKQNGN) has biased composition (polar residues). Residues 59 to 69 (DEDDDLEEDFQ) are compositionally biased toward acidic residues. A compositionally biased stretch (basic residues) spans 74 to 83 (PKKKQQKQPP). Over residues 95 to 141 (SESDDDEQEDEADEDSDLDEVAEVDEEDVDSGSEDDDQQEDEDEEEP) the composition is skewed to acidic residues. The Q motif motif lies at 187 to 215 (FASLKGAVSEATLRAIKEMGFTEMTEIQS). The region spanning 218–393 (LTPLLKGRDL…KLALKSEPIY (176 aa)) is the Helicase ATP-binding domain. Position 231-238 (231-238 (AQTGSGKT)) interacts with ATP. Residues 341–344 (DEVD) carry the DEVD box motif. One can recognise a Helicase C-terminal domain in the interval 407 to 577 (GLEQGYIVCP…DIQLQLEKLI (171 aa)). Residues 659-680 (GSASKQRHFKQVNRDQAKKFMR) form a disordered region. The segment covering 670-680 (VNRDQAKKFMR) has biased composition (basic and acidic residues).

This sequence belongs to the DEAD box helicase family. DDX18/HAS1 subfamily.

The protein localises to the nucleus. The protein resides in the nucleolus. The enzyme catalyses ATP + H2O = ADP + phosphate + H(+). Functionally, probable RNA-dependent helicase. Functions in cell growth and proliferation. May have a role in ribosome biogenesis and, consequently, in protein biosynthesis. This is Probable ATP-dependent RNA helicase pitchoune (pit) from Drosophila melanogaster (Fruit fly).